The sequence spans 465 residues: Ubiquitin carboxyl-terminal hydrolase UCH54 (465 aa).

Residues 11–333 (EWCLIESNPC…VRFNIIAVMK (323 aa)) form the UCH catalytic domain. Catalysis depends on C145, which acts as the Nucleophile. The active-site Proton donor is H220. Positions 244–293 (INADEQNKPNPNNNNNNKDNDNDNNNNNNNNNNNNNNNNNNNNNNNNNNI) are disordered. Over residues 251-292 (KPNPNNNNNNKDNDNDNNNNNNNNNNNNNNNNNNNNNNNNNN) the composition is skewed to low complexity. Residues 432–460 (NFYPFIMSSLNLMAKHKLLKDAYQKEKLK) form the ULD domain.

This sequence belongs to the peptidase C12 family.

The enzyme catalyses Thiol-dependent hydrolysis of ester, thioester, amide, peptide and isopeptide bonds formed by the C-terminal Gly of ubiquitin (a 76-residue protein attached to proteins as an intracellular targeting signal).. In terms of biological role, thiol protease that recognizes and hydrolyzes a peptide bond at the C-terminal glycine of either ubiquitin or NEDD8. The polypeptide is Ubiquitin carboxyl-terminal hydrolase UCH54 (Plasmodium falciparum (isolate 3D7)).